Here is a 396-residue protein sequence, read N- to C-terminus: dTDP-epi-vancosaminyltransferase (396 aa).

Position 10-12 (Ser10–Gly12) interacts with dTDP-beta-L-4-epi-vancosamine. Devancoaminyl-vancomycin contacts are provided by Asp127, Gln133, Tyr141, and Tyr169. DTDP-beta-L-4-epi-vancosamine contacts are provided by residues Arg207, Ser230, Glu277–Val278, and His293–Thr298.

Belongs to the glycosyltransferase 28 family.

The enzyme catalyses dTDP-beta-L-4-epi-vancosamine + devancoaminyl-vancomycin = chloroorienticin B + dTDP + H(+). It functions in the pathway antibiotic biosynthesis; vancomycin biosynthesis. Functionally, catalyzes the attachment of 4-epi-vancosamine from a TDP donor to the beta-OH-Tyr-6 of the aglycone cosubstrate in the biosynthesis of glycopeptide antibiotic chloroeremomycin, a member of the vancomycin group of antibiotics. Strongly prefers devancoaminyl-vancomycin (DVV) as substrate rather than the heptapeptide vancomycin aglycone (AGV). Acts downstream of GtfB. This chain is dTDP-epi-vancosaminyltransferase (gtfA), found in Amycolatopsis orientalis (Nocardia orientalis).